Consider the following 2084-residue polypeptide: Autophagy-related protein 2 (2084 aa).

Residues 57-71 are compositionally biased toward basic and acidic residues; it reads RAETHDATTDQKTSG. Disordered stretches follow at residues 57–87, 100–131, 242–334, 372–404, 425–482, 613–633, 653–693, 728–749, 907–940, and 2065–2084; these read RAET…PNPT, EEKE…EELG, APAS…DSRQ, DGLF…EGAL, LEAP…SESR, EKVP…DGLK, IHGF…FSSE, GHGD…EQVQ, SASG…PQDT, and AGNT…YKRH. Residues 108–118 show a composition bias toward polar residues; that stretch reads AISSQSQVLQH. A compositionally biased stretch (low complexity) spans 251–279; that stretch reads QPKSSRPPSRAQSPSPETSSESSLALAMT. Composition is skewed to basic and acidic residues over residues 291–302, 313–334, and 372–382; these read TRQELEEQHTPR, RFSD…DSRQ, and DGLFRRSRDTP. The span at 383–399 shows a compositional bias: polar residues; that stretch reads RSQSPEHTAELTDQNSH. Residues 458–471 show a composition bias toward low complexity; that stretch reads APSSEPDSSGSASE. Residues 618–628 show a composition bias toward polar residues; sequence DSQSASHQEMS. Basic and acidic residues-rich tracts occupy residues 671–693 and 730–744; these read EGVD…FSSE and GDGE…ESKA. Over residues 2072–2084 the composition is skewed to basic and acidic residues; the sequence is SNRRKMEDKYKRH.

It belongs to the ATG2 family.

The protein localises to the preautophagosomal structure membrane. Its subcellular location is the endoplasmic reticulum membrane. It catalyses the reaction a 1,2-diacyl-sn-glycero-3-phosphocholine(in) = a 1,2-diacyl-sn-glycero-3-phosphocholine(out). The catalysed reaction is a 1,2-diacyl-sn-glycero-3-phospho-L-serine(in) = a 1,2-diacyl-sn-glycero-3-phospho-L-serine(out). It carries out the reaction a 1,2-diacyl-sn-glycero-3-phosphoethanolamine(in) = a 1,2-diacyl-sn-glycero-3-phosphoethanolamine(out). In terms of biological role, lipid transfer protein required for autophagosome completion and peroxisome degradation. Tethers the edge of the isolation membrane (IM) to the endoplasmic reticulum (ER) and mediates direct lipid transfer from ER to IM for IM expansion. Atg2 binds to the ER exit site (ERES), which is the membrane source for autophagosome formation, using basic residues in its N-terminal region (NR) and to the expanding edge of the IM through its C-terminal region. The latter binding is assisted by an atg18-PtdIns3P interaction. Atg2 then extracts phospholipids from the membrane source using its NR and transfers them to atg9 to the IM through its predicted beta-sheet-rich structure for membrane expansion. This chain is Autophagy-related protein 2 (atg2), found in Aspergillus oryzae (strain ATCC 42149 / RIB 40) (Yellow koji mold).